The primary structure comprises 88 residues: UPF0250 protein SO_1163 (88 aa).

The protein belongs to the UPF0250 family.

This Shewanella oneidensis (strain ATCC 700550 / JCM 31522 / CIP 106686 / LMG 19005 / NCIMB 14063 / MR-1) protein is UPF0250 protein SO_1163.